The chain runs to 486 residues: MVQLNQNFINSIAKDMPDHLSMDEFISYCAKPLRPSIRVNTLKITTADFITMMNAKGWQFEPVPWCEDGFWVKVDDSVQLGNTVEHIQGLFYIQEASSMLPPKALFPEPIEDATSLTLLDMASAPGSKTTQLAAMMNNQGLLVANEYSSSRVKVLHANVQRMGASNLALTHFDARVFGKYLFESFDAILLDAPCGGEGTVRKDPDALKHWDESEIEAIASVQRDLIESAFLALKPGGSLVYSTCTLNRRENQDVCLHLKATYGDAVQFESLAGLFPGAEKASTSEGFLHVWPQIFDSEGFFIAKLTKIAAVPRNSEEPRKQKNFPFTPIDKKSRQALCDYFDTSFGIKLDGQGILMQRDDEFWLFPTNVDPLIGKIRFQRIGLKLADALKKGFKPRHEAVMALADRLRGIPLDEAQAIQYLMGRDIALTSKEKPQGERLVSYQGAHLGLVKHLGNKLKNSLPRDLVRDKICSSSAMAVDQQATGED.

Residues 122-128 (ASAPGSK), glutamate 146, aspartate 173, and aspartate 191 each bind S-adenosyl-L-methionine. Cysteine 244 functions as the Nucleophile in the catalytic mechanism.

It belongs to the class I-like SAM-binding methyltransferase superfamily. RsmB/NOP family.

The protein localises to the cytoplasm. The catalysed reaction is cytidine(1407) in 16S rRNA + S-adenosyl-L-methionine = 5-methylcytidine(1407) in 16S rRNA + S-adenosyl-L-homocysteine + H(+). Specifically methylates the cytosine at position 1407 (m5C1407) of 16S rRNA. This Shewanella loihica (strain ATCC BAA-1088 / PV-4) protein is Ribosomal RNA small subunit methyltransferase F.